The sequence spans 258 residues: Thiazole synthase (258 aa).

The active-site Schiff-base intermediate with DXP is the Lys-100. Residues Gly-161, 187–188 (AG), and 209–210 (NS) each bind 1-deoxy-D-xylulose 5-phosphate.

Belongs to the ThiG family. In terms of assembly, homotetramer. Forms heterodimers with either ThiH or ThiS.

It localises to the plastid. The protein resides in the chloroplast. It catalyses the reaction [ThiS sulfur-carrier protein]-C-terminal-Gly-aminoethanethioate + 2-iminoacetate + 1-deoxy-D-xylulose 5-phosphate = [ThiS sulfur-carrier protein]-C-terminal Gly-Gly + 2-[(2R,5Z)-2-carboxy-4-methylthiazol-5(2H)-ylidene]ethyl phosphate + 2 H2O + H(+). Its pathway is cofactor biosynthesis; thiamine diphosphate biosynthesis. Its function is as follows. Catalyzes the rearrangement of 1-deoxy-D-xylulose 5-phosphate (DXP) to produce the thiazole phosphate moiety of thiamine. Sulfur is provided by the thiocarboxylate moiety of the carrier protein ThiS. In vitro, sulfur can be provided by H(2)S. In Cyanidioschyzon merolae (strain NIES-3377 / 10D) (Unicellular red alga), this protein is Thiazole synthase.